A 253-amino-acid chain; its full sequence is Ubiquinone biosynthesis O-methyltransferase (253 aa).

S-adenosyl-L-methionine-binding residues include Arg47, Gly78, Asp99, and Met141.

The protein belongs to the methyltransferase superfamily. UbiG/COQ3 family.

The enzyme catalyses a 3-demethylubiquinol + S-adenosyl-L-methionine = a ubiquinol + S-adenosyl-L-homocysteine + H(+). It carries out the reaction a 3-(all-trans-polyprenyl)benzene-1,2-diol + S-adenosyl-L-methionine = a 2-methoxy-6-(all-trans-polyprenyl)phenol + S-adenosyl-L-homocysteine + H(+). It functions in the pathway cofactor biosynthesis; ubiquinone biosynthesis. O-methyltransferase that catalyzes the 2 O-methylation steps in the ubiquinone biosynthetic pathway. The sequence is that of Ubiquinone biosynthesis O-methyltransferase from Bradyrhizobium sp. (strain ORS 278).